The following is a 357-amino-acid chain: GDP-mannose transporter 2 (357 aa).

At 1–33 the chain is on the cytoplasmic side; it reads MASARNGVSKDELLPVYERRSQRDGDISGSVKS. The chain crosses the membrane as a helical span at residues 34–54; it reads FASTIGNSASAAVLAYCLSSI. Residues 55-68 are Lumenal-facing; the sequence is SMTLVNKYVVSGAS. The helical transmembrane segment at 69–89 threads the bilayer; sequence WNLSFLYLAMQSFIGTVAILA. At 90–107 the chain is on the cytoplasmic side; sequence CKKTGLIQNLALFDLKKA. A helical transmembrane segment spans residues 108–128; sequence QTWLPISLLLVGMIYTGNKAL. A topological domain (lumenal) is located at residue Gln129. The helical transmembrane segment at 130-150 threads the bilayer; sequence FLSVPVYTIFKNLTIIVIAYG. The Cytoplasmic portion of the chain corresponds to 151–161; it reads EVLMVGGGVKP. Residues 162–181 form a helical membrane-spanning segment; it reads LALLSFGLMVLSSVVAAWAD. The Lumenal portion of the chain corresponds to 182–196; that stretch reads IQNATTATVGASSDS. Asn184 is a glycosylation site (N-linked (GlcNAc...) asparagine). Residues 197 to 217 form a helical membrane-spanning segment; that stretch reads TAAALSALNAGYAWMGTNVIF. Residues 218-236 lie on the Cytoplasmic side of the membrane; that stretch reads SASYALGMRRVIKKTNFDN. Residues 237–257 traverse the membrane as a helical segment; that stretch reads WDVMFYNNLLSIPILLLASVL. At 258-277 the chain is on the lumenal side; the sequence is AEDWSSENLQRNFPAELRQS. A helical transmembrane segment spans residues 278–298; the sequence is LFIGILYSGVAAVFISYCTAW. Residues 299 to 306 are Cytoplasmic-facing; it reads CVRATSST. The helical transmembrane segment at 307-327 threads the bilayer; sequence TYAMVGALNKLPLAVAGIVFF. Residues 328 to 332 are Lumenal-facing; the sequence is AAPVT. A helical membrane pass occupies residues 333–352; it reads FGSVSAIVLGFISGLVYARA. Residues 353 to 357 lie on the Cytoplasmic side of the membrane; that stretch reads KSTGA.

Belongs to the TPT transporter family. SLC35D subfamily. Homooligomer.

Its subcellular location is the golgi apparatus membrane. It is found in the cytoplasmic vesicle membrane. It localises to the endoplasmic reticulum membrane. In terms of biological role, involved in the import of GDP-mannose from the cytoplasm into the Golgi lumen. The chain is GDP-mannose transporter 2 (gmt2) from Neosartorya fischeri (strain ATCC 1020 / DSM 3700 / CBS 544.65 / FGSC A1164 / JCM 1740 / NRRL 181 / WB 181) (Aspergillus fischerianus).